Consider the following 279-residue polypeptide: tRNA (carboxymethyluridine(34)-5-O)-methyltransferase (279 aa).

A disordered region spans residues 172–236 (KSKSKPKTKS…QQQDQEQERE (65 aa)). Residues 200–229 (PKERSEYLQRWKEEQQRSKSLDDNDEKQQQ) are compositionally biased toward basic and acidic residues.

Interacts with TRM112.

It is found in the cytoplasm. The protein localises to the nucleus. The catalysed reaction is 5-(carboxymethyl)uridine(34) in tRNA + S-adenosyl-L-methionine = 5-(2-methoxy-2-oxoethyl)uridine(34) in tRNA + S-adenosyl-L-homocysteine. Required for the methylation of the wobble bases at position 34 in tRNA. Appears to have a role in stress-response. The protein is tRNA (carboxymethyluridine(34)-5-O)-methyltransferase (TRM9) of Saccharomyces cerevisiae (strain ATCC 204508 / S288c) (Baker's yeast).